We begin with the raw amino-acid sequence, 201 residues long: LexA repressor (201 aa).

Positions 28 to 48 (LREIGGHLGINGTLGVMKHLD) form a DNA-binding region, H-T-H motif. Active-site for autocatalytic cleavage activity residues include serine 120 and lysine 157.

This sequence belongs to the peptidase S24 family. In terms of assembly, homodimer.

It catalyses the reaction Hydrolysis of Ala-|-Gly bond in repressor LexA.. In terms of biological role, represses a number of genes involved in the response to DNA damage (SOS response), including recA and lexA. In the presence of single-stranded DNA, RecA interacts with LexA causing an autocatalytic cleavage which disrupts the DNA-binding part of LexA, leading to derepression of the SOS regulon and eventually DNA repair. This chain is LexA repressor, found in Geotalea uraniireducens (strain Rf4) (Geobacter uraniireducens).